The primary structure comprises 86 residues: Apolipoprotein C-I (86 aa).

The N-terminal stretch at 1 to 26 (MRLFLSLPVLVVVLLMILEGPGPAQG) is a signal peptide.

The protein belongs to the apolipoprotein C1 family.

Its subcellular location is the secreted. Functionally, inhibitor of lipoprotein binding to the low density lipoprotein (LDL) receptor, LDL receptor-related protein, and very low density lipoprotein (VLDL) receptor. Associates with high density lipoproteins (HDL) and the triacylglycerol-rich lipoproteins in the plasma and makes up about 10% of the protein of the VLDL and 2% of that of HDL. Appears to interfere directly with fatty acid uptake and is also the major plasma inhibitor of cholesteryl ester transfer protein (CETP). Binds free fatty acids and reduces their intracellular esterification. Modulates the interaction of APOE with beta-migrating VLDL and inhibits binding of beta-VLDL to the LDL receptor-related protein. The sequence is that of Apolipoprotein C-I (APOC1) from Ateles geoffroyi (Black-handed spider monkey).